The primary structure comprises 376 residues: UPF0754 membrane protein Sca_1420 (376 aa).

2 helical membrane-spanning segments follow: residues 4-24 and 356-376; these read FLVI…TNII and LLGF…ALFV.

It belongs to the UPF0754 family.

It localises to the cell membrane. This chain is UPF0754 membrane protein Sca_1420, found in Staphylococcus carnosus (strain TM300).